We begin with the raw amino-acid sequence, 175 residues long: Archaemetzincin (175 aa).

Residue H125 coordinates Zn(2+). The Proton acceptor role is filled by E126. Zn(2+)-binding residues include H129, H135, C136, C141, C160, and C163.

This sequence belongs to the peptidase M54 family. As to quaternary structure, monomer. Zn(2+) is required as a cofactor.

In terms of biological role, probable zinc metalloprotease whose natural substrate is unknown. Does not show endo- or exopeptidase activity against resorufin labeled casein, p-nitroanilide (pNA), amidomethylcoumarin (AMC) (one to three amino acids in length), and hippuryl-aminoacid substrates. This chain is Archaemetzincin, found in Methanopyrus kandleri (strain AV19 / DSM 6324 / JCM 9639 / NBRC 100938).